Here is a 24-residue protein sequence, read N- to C-terminus: Small ribosomal subunit protein uS19c (24 aa).

It belongs to the universal ribosomal protein uS19 family.

Its subcellular location is the plastid. The protein localises to the chloroplast. Its function is as follows. Protein S19 forms a complex with S13 that binds strongly to the 16S ribosomal RNA. This chain is Small ribosomal subunit protein uS19c (rps19), found in Petunia hybrida (Petunia).